Consider the following 602-residue polypeptide: Protein SHORT-ROOT 1 (602 aa).

Low complexity predominate over residues 12–55 (AASEQQQQQQQSASYNSRSTTSSGSRSSSHQTNASYSYYHHSSN). 3 disordered regions span residues 12 to 69 (AASE…YYYG), 101 to 145 (DFSS…TAAG), and 165 to 185 (DFSS…AVGG). The segment covering 56–68 (SGGGGGGGGGYYY) has biased composition (gly residues). Low complexity predominate over residues 122-145 (PPASSTPTGTAPTPPLSTSSTAAG). Gly residues predominate over residues 173 to 185 (SGGGTASSGAVGG). The GRAS domain maps to 183–601 (VGGGGGGRWA…QPLVWASAWR (419 aa)). Positions 190 to 253 (RWASQLLLEC…LTASGPRTLR (64 aa)) are leucine repeat I (LRI). The tract at residues 272 to 349 (ALRFQELSPW…PHLSITTVVS (78 aa)) is VHIID. The VHIID motif lies at 311-315 (FHILD). Residues 365–401 (EIGQRMEKFARLMGVPFRFRAVHHSGDLAELDLDALD) form a leucine repeat II (LRII) region. The interval 411–517 (LAVNCVNSLR…ERGAGRAIVD (107 aa)) is PFYRE. The interval 520–601 (SCPASESMER…QPLVWASAWR (82 aa)) is SAW.

The protein belongs to the GRAS family. Interacts with SCR1. Interacts with SMOS1. As to expression, expressed in leaves and roots. Detected in the stele, the endodermis and part of the cortex.

Its subcellular location is the nucleus. In terms of biological role, transcription factor required for the asymmetric cell division involved in radial pattern formation in roots. Essential for both cell division and cell specification. This is Protein SHORT-ROOT 1 from Oryza sativa subsp. japonica (Rice).